We begin with the raw amino-acid sequence, 252 residues long: 2-succinyl-6-hydroxy-2,4-cyclohexadiene-1-carboxylate synthase (252 aa).

It belongs to the AB hydrolase superfamily. MenH family. In terms of assembly, monomer.

The catalysed reaction is 5-enolpyruvoyl-6-hydroxy-2-succinyl-cyclohex-3-ene-1-carboxylate = (1R,6R)-6-hydroxy-2-succinyl-cyclohexa-2,4-diene-1-carboxylate + pyruvate. It participates in quinol/quinone metabolism; 1,4-dihydroxy-2-naphthoate biosynthesis; 1,4-dihydroxy-2-naphthoate from chorismate: step 3/7. The protein operates within quinol/quinone metabolism; menaquinone biosynthesis. Catalyzes a proton abstraction reaction that results in 2,5-elimination of pyruvate from 2-succinyl-5-enolpyruvyl-6-hydroxy-3-cyclohexene-1-carboxylate (SEPHCHC) and the formation of 2-succinyl-6-hydroxy-2,4-cyclohexadiene-1-carboxylate (SHCHC). This chain is 2-succinyl-6-hydroxy-2,4-cyclohexadiene-1-carboxylate synthase, found in Salmonella schwarzengrund (strain CVM19633).